The following is a 358-amino-acid chain: Phospho-N-acetylmuramoyl-pentapeptide-transferase (358 aa).

Transmembrane regions (helical) follow at residues 28 to 48 (AALM…ITWL), 70 to 90 (TPTM…LLWA), 92 to 112 (LTNI…AVGF), 133 to 153 (MGGQ…NPDY), 165 to 185 (VTFD…VAAS), 196 to 216 (GLAI…IYIT), 233 to 253 (VGEV…FLWF), 260 to 280 (VFMG…LALL), 285 to 305 (LVLA…IVQV), and 335 to 355 (KIII…LSVL).

The protein belongs to the glycosyltransferase 4 family. MraY subfamily. Requires Mg(2+) as cofactor.

It is found in the cell inner membrane. It carries out the reaction UDP-N-acetyl-alpha-D-muramoyl-L-alanyl-gamma-D-glutamyl-meso-2,6-diaminopimeloyl-D-alanyl-D-alanine + di-trans,octa-cis-undecaprenyl phosphate = di-trans,octa-cis-undecaprenyl diphospho-N-acetyl-alpha-D-muramoyl-L-alanyl-D-glutamyl-meso-2,6-diaminopimeloyl-D-alanyl-D-alanine + UMP. Its pathway is cell wall biogenesis; peptidoglycan biosynthesis. In terms of biological role, catalyzes the initial step of the lipid cycle reactions in the biosynthesis of the cell wall peptidoglycan: transfers peptidoglycan precursor phospho-MurNAc-pentapeptide from UDP-MurNAc-pentapeptide onto the lipid carrier undecaprenyl phosphate, yielding undecaprenyl-pyrophosphoryl-MurNAc-pentapeptide, known as lipid I. The protein is Phospho-N-acetylmuramoyl-pentapeptide-transferase of Desulfovibrio desulfuricans (strain ATCC 27774 / DSM 6949 / MB).